Consider the following 274-residue polypeptide: MAVIKCKPTSPGRRHVVKVVNTDLHKGKPFAGLLAKKSKSGGRNNTGRITVRHVGGGHKQHYRLIDFKRDKDGIPAKIERLEYDPNRTANIALVLYADGERRYILAAKGMQAGDKIQSGVEAEIKTGNAMPLRNIPVGSVVHAVEMKPGKGAQIARSAGAYVQVVARDGAYATLRLRSGEMRKVPVDCRATFGEVGNAEHMLRQLGKAGAKRWRGIRPTVRGVAMNPVDHPHGGGEGRTSGGRHPVTPWGVPTKGYKTRSNKRTDKYIVRRRNK.

Residues 223-274 form a disordered region; sequence VAMNPVDHPHGGGEGRTSGGRHPVTPWGVPTKGYKTRSNKRTDKYIVRRRNK.

The protein belongs to the universal ribosomal protein uL2 family. In terms of assembly, part of the 50S ribosomal subunit. Forms a bridge to the 30S subunit in the 70S ribosome.

Its function is as follows. One of the primary rRNA binding proteins. Required for association of the 30S and 50S subunits to form the 70S ribosome, for tRNA binding and peptide bond formation. It has been suggested to have peptidyltransferase activity; this is somewhat controversial. Makes several contacts with the 16S rRNA in the 70S ribosome. The sequence is that of Large ribosomal subunit protein uL2 from Shewanella putrefaciens (strain CN-32 / ATCC BAA-453).